We begin with the raw amino-acid sequence, 365 residues long: MKGRWVKYLLMGTVVAMLAACSSKPTDRGQQYKDGKFTQPFSLVNQPDAVGAPINAGDFAEQINHIRNSSPRLYGNQSNVYNAVQEWLRAGGDTRNMRQFGIDAWQMEGADNYGNVQFTGYYTPVIQARHTRQGEFQYPIYRMPPKRGRLPSRAEIYAGALSDKYILAYSNSLMDNFIMDVQGSGYIDFGDGSPLNFFSYAGKNGHAYRSIGKVLIDRGEVKKEDMSMQAIRHWGETHSEAEVRELLEQNPSFVFFKPQSFAPVKGASAVPLVGRASVASDRSIIPPGTTLLAEVPLLDNNGKFNGQYELRLMVALDVGGAIKGQHFDIYQGIGPEAGHRAGWYNHYGRVWVLKTAPGAGNVFSG.

A signal peptide spans 1–20; sequence MKGRWVKYLLMGTVVAMLAA. The N-palmitoyl cysteine moiety is linked to residue Cys21. Cys21 is lipidated: S-diacylglycerol cysteine.

The protein resides in the cell outer membrane. It carries out the reaction Exolytic cleavage of the (1-&gt;4)-beta-glycosidic linkage between N-acetylmuramic acid (MurNAc) and N-acetylglucosamine (GlcNAc) residues in peptidoglycan, from either the reducing or the non-reducing ends of the peptidoglycan chains, with concomitant formation of a 1,6-anhydrobond in the MurNAc residue.. In terms of biological role, murein-degrading enzyme. May play a role in recycling of muropeptides during cell elongation and/or cell division. Degrades murein glycan strands and insoluble, high-molecular weight murein sacculi. This Escherichia coli O157:H7 protein is Membrane-bound lytic murein transglycosylase A (mltA).